The following is a 237-amino-acid chain: Class B acid phosphatase (237 aa).

Residues 1–23 (MRKVTLVFSAIAFAFSLNGVVQA) form the signal peptide. Aspartate 69 (nucleophile) is an active-site residue. Residues aspartate 69 and aspartate 71 each contribute to the Mg(2+) site. Aspartate 71 acts as the Proton donor in catalysis. Substrate is bound by residues 137–138 (TG) and lysine 177. Mg(2+) is bound at residue aspartate 192.

It belongs to the class B bacterial acid phosphatase family. In terms of assembly, homotetramer. Requires Mg(2+) as cofactor.

The protein localises to the periplasm. The catalysed reaction is a phosphate monoester + H2O = an alcohol + phosphate. Dephosphorylates several organic phosphate monoesters. Also has a phosphotransferase activity catalyzing the transfer of low-energy phosphate groups from organic phosphate monoesters to free hydroxyl groups of various organic compounds. The protein is Class B acid phosphatase of Xenorhabdus bovienii (strain SS-2004) (Xenorhabdus nematophila subsp. bovienii).